The sequence spans 416 residues: Orexin/Hypocretin receptor type 1 (416 aa).

The interval 1–22 is disordered; the sequence is MEPSATPGAQPGVPTSSGEPFH. Residues 1-46 are Extracellular-facing; it reads MEPSATPGAQPGVPTSSGEPFHLPPDYEDEFLRYLWRDYLYPKQYE. The required for response to orexin-A stretch occupies residues 26 to 41; sequence DYEDEFLRYLWRDYLY. Residues 47–67 form a helical membrane-spanning segment; the sequence is WVLIAAYVAVFLIALVGNTLV. At 68-82 the chain is on the cytoplasmic side; it reads CLAVWRNHHMRTVTN. A helical membrane pass occupies residues 83-105; the sequence is YFIVNLSLADVLVTAICLPASLL. Topologically, residues 106-119 are extracellular; sequence VDITESWLFGQALC. Cys-119 and Cys-202 form a disulfide bridge. A helical transmembrane segment spans residues 120-140; sequence KVIPYLQAVSVSVAVLTLSFI. Residues 141-160 are Cytoplasmic-facing; the sequence is ALDRWYAICHPLLFKSTARR. A helical transmembrane segment spans residues 161 to 182; that stretch reads ARGSILGIWAVSLAVMVPQAAV. Residues 183–213 are Extracellular-facing; that stretch reads MECSSVLPELANRTRLFSVCDEHWADELYPK. N-linked (GlcNAc...) asparagine glycosylation is present at Asn-194. The helical transmembrane segment at 214–235 threads the bilayer; the sequence is IYHSCFFIVTYLAPLGLMAMAY. The Cytoplasmic portion of the chain corresponds to 236–298; that stretch reads FQIFRKLWGR…QMRARRKTAK (63 aa). Residues 299–321 traverse the membrane as a helical segment; the sequence is MLMVVLLVFALCYLPISVLNVLK. At 322 to 336 the chain is on the extracellular side; the sequence is RVFGMFRQASDREAV. Residues 337 to 360 traverse the membrane as a helical segment; the sequence is YACFTFSHWLVYANSAANPIIYNF. Residues 361-416 are Cytoplasmic-facing; the sequence is LSGKFREQFKAAFSCCLPGLGPGSSARHKSLSLQSRCSVSKVSEHVVLTTVTTVLS.

It belongs to the G-protein coupled receptor 1 family. In terms of tissue distribution, widely expressed.

The protein resides in the cell membrane. Functionally, moderately selective excitatory receptor for orexin-A and, with a lower affinity, for orexin-B neuropeptide. Triggers an increase in cytoplasmic Ca(2+) levels in response to orexin-A binding. This Mus musculus (Mouse) protein is Orexin/Hypocretin receptor type 1.